The sequence spans 754 residues: 5-methyltetrahydropteroyltriglutamate--homocysteine methyltransferase (754 aa).

5-methyltetrahydropteroyltri-L-glutamate is bound by residues 17–20 and Lys117; that span reads RELK. L-homocysteine-binding positions include 431-433 and Glu484; that span reads IGS. L-methionine contacts are provided by residues 431-433 and Glu484; that span reads IGS. 5-methyltetrahydropteroyltri-L-glutamate is bound by residues 515-516 and Trp561; that span reads RC. Residue Asp599 participates in L-homocysteine binding. Residue Asp599 coordinates L-methionine. Glu605 lines the 5-methyltetrahydropteroyltri-L-glutamate pocket. His641, Cys643, and Glu665 together coordinate Zn(2+). His694 functions as the Proton donor in the catalytic mechanism. A Zn(2+)-binding site is contributed by Cys726.

Belongs to the vitamin-B12 independent methionine synthase family. The cofactor is Zn(2+).

The enzyme catalyses 5-methyltetrahydropteroyltri-L-glutamate + L-homocysteine = tetrahydropteroyltri-L-glutamate + L-methionine. It participates in amino-acid biosynthesis; L-methionine biosynthesis via de novo pathway; L-methionine from L-homocysteine (MetE route): step 1/1. Catalyzes the transfer of a methyl group from 5-methyltetrahydrofolate to homocysteine resulting in methionine formation. The chain is 5-methyltetrahydropteroyltriglutamate--homocysteine methyltransferase from Salmonella paratyphi B (strain ATCC BAA-1250 / SPB7).